The chain runs to 207 residues: Putative transcriptional regulator (207 aa).

Residues 3 to 118 (KVLIVDDHPA…ELLLAAKAVL (116 aa)) enclose the Response regulatory domain. 4-aspartylphosphate occurs at positions 9 and 53. The HTH luxR-type domain occupies 140-205 (EARMLESLSD…GLIDFARRHE (66 aa)). Positions 155 to 174 (LQYLANGNTNKAIAQQLFLS) form a DNA-binding region, H-T-H motif.

Functionally, probable transcriptional regulator. This chain is Putative transcriptional regulator, found in Pseudomonas aeruginosa (strain ATCC 15692 / DSM 22644 / CIP 104116 / JCM 14847 / LMG 12228 / 1C / PRS 101 / PAO1).